The primary structure comprises 352 residues: Protein CIA1 (352 aa).

7 WD repeats span residues 18 to 64, 72 to 111, 116 to 155, 161 to 200, 211 to 250, 265 to 303, and 315 to 352; these read GHTD…RSWT, THTRTVRSCAWSPSGQLLATASFDGTTGIWKNYGSEFECI, GHENEVKSVSWNASGSCLATCSRDKSVWIWEVLEGNEYDC, GHTQDVKMVQWHPTMDVLFSCSYDNTIKVWWSEDDDGEYQ, GHSSTVWSISFNAAGDKMVTCSDDLTLKIWGTDIAKMQSG, YHDRTIYSAHWSRDDIIASGAGDNAIRLFVDSKHDSVDG, and AHENDVNSVQWSPGEGNRLLASASDDGMVKIWQLATKP.

It belongs to the WD repeat CIA1 family. Part of a complex composed of AE7, CIA1, MMS19 and NAR1. Interacts with AE7 and NAR1.

Its subcellular location is the nucleus. The protein localises to the cytoplasm. Essential component of the cytosolic iron-sulfur (Fe-S) protein assembly (CIA) machinery. Required for the maturation of extramitochondrial Fe/S proteins. The chain is Protein CIA1 from Arabidopsis thaliana (Mouse-ear cress).